We begin with the raw amino-acid sequence, 295 residues long: Mycothiol acetyltransferase (295 aa).

2 consecutive N-acetyltransferase domains span residues 5–141 (VEIR…TPLP) and 149–295 (VRLR…MYRR). A 1D-myo-inositol 2-(L-cysteinylamino)-2-deoxy-alpha-D-glucopyranoside-binding site is contributed by Glu35. An acetyl-CoA-binding site is contributed by 76-78 (LVV). 1D-myo-inositol 2-(L-cysteinylamino)-2-deoxy-alpha-D-glucopyranoside is bound by residues Glu176, Lys215, and Glu229. Acetyl-CoA-binding positions include 233 to 235 (VGV) and 240 to 246 (RGTGLGR). Residue Tyr267 participates in 1D-myo-inositol 2-(L-cysteinylamino)-2-deoxy-alpha-D-glucopyranoside binding. Residue 272–277 (NTAAVR) coordinates acetyl-CoA.

The protein belongs to the acetyltransferase family. MshD subfamily. As to quaternary structure, monomer.

It catalyses the reaction 1D-myo-inositol 2-(L-cysteinylamino)-2-deoxy-alpha-D-glucopyranoside + acetyl-CoA = mycothiol + CoA + H(+). In terms of biological role, catalyzes the transfer of acetyl from acetyl-CoA to desacetylmycothiol (Cys-GlcN-Ins) to form mycothiol. This chain is Mycothiol acetyltransferase, found in Thermobispora bispora (strain ATCC 19993 / DSM 43833 / CBS 139.67 / JCM 10125 / KCTC 9307 / NBRC 14880 / R51).